The following is a 280-amino-acid chain: Acetylglutamate kinase (280 aa).

Substrate is bound by residues 64–65 (GG), Arg-86, and Asn-179.

The protein belongs to the acetylglutamate kinase family. ArgB subfamily.

The protein resides in the cytoplasm. It catalyses the reaction N-acetyl-L-glutamate + ATP = N-acetyl-L-glutamyl 5-phosphate + ADP. The protein operates within amino-acid biosynthesis; L-arginine biosynthesis; N(2)-acetyl-L-ornithine from L-glutamate: step 2/4. Catalyzes the ATP-dependent phosphorylation of N-acetyl-L-glutamate. This is Acetylglutamate kinase from Campylobacter fetus subsp. fetus (strain 82-40).